The chain runs to 317 residues: RHOMBOID-like protein 2 (317 aa).

A run of 7 helical transmembrane segments spans residues 33 to 53, 118 to 138, 149 to 169, 172 to 192, 202 to 222, 224 to 244, and 272 to 292; these read SWLIPAIVVANLAVFIAVMFV, WLHAGIIHLLTNMLSLIFIGI, VGLIYLISGLGGSILSSLFLQ, ISVGASGALFGLLGAMLSELL, AAALITLLFIIAINLALGMLP, VDNFAHIGGFLTGFCLGFVLL, and LFVVSVVLLVVGLTVALVMLF. The active-site Nucleophile is the S177. H229 (charge relay system) is an active-site residue.

The protein belongs to the peptidase S54 family. Expressed in roots, seedlings, leaves, stems and flowers.

The protein localises to the golgi apparatus membrane. It carries out the reaction Cleaves type-1 transmembrane domains using a catalytic dyad composed of serine and histidine that are contributed by different transmembrane domains.. Its function is as follows. Rhomboid-type serine protease that catalyzes intramembrane proteolysis. Can cleave the Drosophila proteins Spitz and Keren. May function in pollen elongation. In Arabidopsis thaliana (Mouse-ear cress), this protein is RHOMBOID-like protein 2.